Here is a 366-residue protein sequence, read N- to C-terminus: Sperm equatorial segment protein 1 (366 aa).

The signal sequence occupies residues 1-18; sequence MKFLVLLVALLLWPSSLP. N-linked (GlcNAc...) asparagine glycosylation occurs at N129. The interval 139–204 is disordered; that stretch reads PFIEKDEPEP…EDVPQLSGDN (66 aa). Positions 144–157 are enriched in acidic residues; that stretch reads DEPEPEPEPEPEPE. Polar residues predominate over residues 165 to 189; it reads APTQVPSVTEPSQDVTSLSGSTDLG.

This sequence belongs to the SPESP1 family. Glycosylated. In testis there are two predominant forms of 77- and 67-kDa and a form of 47-kDa, whereas in epididymal sperm from caput, corpus, and cauda there are two forms of 47- and 43-kDa. Testis forms contain complex carbohydrate residues. Epididymal sperm forms are N-glycosylated. Then undergoes significant glycosylation in the testis and that the majority of these glycoconjugates are removed by the time sperm reach the caput epididymis.

It localises to the cytoplasmic vesicle. The protein resides in the secretory vesicle. The protein localises to the acrosome. Involved in fertilization ability of sperm. The sequence is that of Sperm equatorial segment protein 1 from Bos taurus (Bovine).